We begin with the raw amino-acid sequence, 440 residues long: Xaa-Pro dipeptidase (440 aa).

5 residues coordinate Mn(2+): D244, D255, H335, E380, and E419.

Belongs to the peptidase M24B family. Bacterial-type prolidase subfamily. It depends on Mn(2+) as a cofactor.

It carries out the reaction Xaa-L-Pro dipeptide + H2O = an L-alpha-amino acid + L-proline. Its function is as follows. Splits dipeptides with a prolyl residue in the C-terminal position. This is Xaa-Pro dipeptidase from Shewanella halifaxensis (strain HAW-EB4).